A 954-amino-acid polypeptide reads, in one-letter code: Alpha-xylosidase BoGH31A (954 aa).

The N-terminal stretch at 1–20 (MIMNMKNIFYCLLPGLLLGA) is a signal peptide. Cys-21 carries the N-palmitoyl cysteine lipid modification. The S-diacylglycerol cysteine moiety is linked to residue Cys-21. Residues 227–366 (TGQEGALTGT…NPEEQGKQSW (140 aa)) form the PA14 domain. Residues Asp-553 and Glu-556 contribute to the active site. Asp-630 functions as the Proton donor in the catalytic mechanism.

Belongs to the glycosyl hydrolase 31 family.

The protein resides in the cell inner membrane. It catalyses the reaction Hydrolysis of terminal, non-reducing alpha-D-xylose residues with release of alpha-D-xylose.. It functions in the pathway glucan metabolism; xyloglucan degradation. Functionally, catalyzes the liberation of alpha-xylose from the non-reducing terminal glucose of xyloglucan oligosaccharides in xyloglucan degradation, converting the 'X' to 'G' units. The chain is Alpha-xylosidase BoGH31A from Bacteroides ovatus (strain ATCC 8483 / DSM 1896 / JCM 5824 / BCRC 10623 / CCUG 4943 / NCTC 11153).